The following is a 243-amino-acid chain: Adenosylcobinamide-GDP ribazoletransferase (243 aa).

The next 5 helical transmembrane spans lie at 31 to 51 (LLFY…LNIA), 57 to 77 (LLLH…ALHL), 109 to 129 (IAVV…LALI), 135 to 155 (MALI…FLTT), and 188 to 208 (LVIA…VFIW).

Belongs to the CobS family. Mg(2+) serves as cofactor.

The protein resides in the cell inner membrane. The enzyme catalyses alpha-ribazole + adenosylcob(III)inamide-GDP = adenosylcob(III)alamin + GMP + H(+). The catalysed reaction is alpha-ribazole 5'-phosphate + adenosylcob(III)inamide-GDP = adenosylcob(III)alamin 5'-phosphate + GMP + H(+). It participates in cofactor biosynthesis; adenosylcobalamin biosynthesis; adenosylcobalamin from cob(II)yrinate a,c-diamide: step 7/7. Its function is as follows. Joins adenosylcobinamide-GDP and alpha-ribazole to generate adenosylcobalamin (Ado-cobalamin). Also synthesizes adenosylcobalamin 5'-phosphate from adenosylcobinamide-GDP and alpha-ribazole 5'-phosphate. In Pseudomonas fluorescens (strain Pf0-1), this protein is Adenosylcobinamide-GDP ribazoletransferase.